The sequence spans 372 residues: NADH-quinone oxidoreductase subunit H (372 aa).

Transmembrane regions (helical) follow at residues 34-54 (LPLGLLVIAAIPLVFIALYAL), 106-126 (FLFVIGPGVLFVGSFLAFAVL), 139-159 (VGLFYAIGIVALEVVGILAAG), 178-198 (IVSYEIPAAIALLCGAMMAGT), 217-237 (FFLFQSPIAWLPFLIYFIASL), 269-289 (VIFLAEYGSMFMVSAIIAIVF), 313-333 (VWGAFWIIMKGFFFIFVQMWL), and 352-372 (VLTPFAFVSFVLTAIWMIYVP).

The protein belongs to the complex I subunit 1 family. NDH-1 is composed of 14 different subunits. Subunits NuoA, H, J, K, L, M, N constitute the membrane sector of the complex.

The protein localises to the cell inner membrane. The catalysed reaction is a quinone + NADH + 5 H(+)(in) = a quinol + NAD(+) + 4 H(+)(out). In terms of biological role, NDH-1 shuttles electrons from NADH, via FMN and iron-sulfur (Fe-S) centers, to quinones in the respiratory chain. The immediate electron acceptor for the enzyme in this species is believed to be ubiquinone. Couples the redox reaction to proton translocation (for every two electrons transferred, four hydrogen ions are translocated across the cytoplasmic membrane), and thus conserves the redox energy in a proton gradient. This subunit may bind ubiquinone. This Chlorobium luteolum (strain DSM 273 / BCRC 81028 / 2530) (Pelodictyon luteolum) protein is NADH-quinone oxidoreductase subunit H.